The chain runs to 394 residues: Phosphoglycerate kinase (394 aa).

Residues 21–23 (DFN), arginine 36, 59–62 (HLGR), arginine 118, and arginine 151 contribute to the substrate site. ATP contacts are provided by residues lysine 202, glycine 293, glutamate 324, and 350-353 (GGDS).

This sequence belongs to the phosphoglycerate kinase family. Monomer.

The protein resides in the cytoplasm. It carries out the reaction (2R)-3-phosphoglycerate + ATP = (2R)-3-phospho-glyceroyl phosphate + ADP. It participates in carbohydrate degradation; glycolysis; pyruvate from D-glyceraldehyde 3-phosphate: step 2/5. The polypeptide is Phosphoglycerate kinase (Exiguobacterium sp. (strain ATCC BAA-1283 / AT1b)).